A 390-amino-acid chain; its full sequence is Phosphopentomutase (390 aa).

Mn(2+)-binding residues include Asp11, Asp283, His288, Asp324, His325, and His336.

The protein belongs to the phosphopentomutase family. It depends on Mn(2+) as a cofactor.

The protein localises to the cytoplasm. It catalyses the reaction 2-deoxy-alpha-D-ribose 1-phosphate = 2-deoxy-D-ribose 5-phosphate. It carries out the reaction alpha-D-ribose 1-phosphate = D-ribose 5-phosphate. It functions in the pathway carbohydrate degradation; 2-deoxy-D-ribose 1-phosphate degradation; D-glyceraldehyde 3-phosphate and acetaldehyde from 2-deoxy-alpha-D-ribose 1-phosphate: step 1/2. Its function is as follows. Isomerase that catalyzes the conversion of deoxy-ribose 1-phosphate (dRib-1-P) and ribose 1-phosphate (Rib-1-P) to deoxy-ribose 5-phosphate (dRib-5-P) and ribose 5-phosphate (Rib-5-P), respectively. The chain is Phosphopentomutase from Alkaliphilus metalliredigens (strain QYMF).